A 311-amino-acid chain; its full sequence is MASTPCAACKLLRRKCTQECVFAPYFPPTNPQKFIFVHRVFGASNVTKILNDLPPDQREDTVNSLFYEAEARIRDPIYGCVGLISFLQQYLKKIQQDLLTAKEELVGYLGPDAVIPPPYLPPIGNNPPPNFMMSMEGMPPGVIPQGEPLMIREPNMSQQHHHQQPQDEQLQFIASDAQRMAAMMLERGDQQGMFNGYGIDNNGSVTATGFNQMDVNDQGAGGSLSGPSLALGSFGDAYQMGQETEHGHINHDQLQTQLMLQPPLQEGQEQTEEGQFLMQPMGQENLHDEEEEEELEPPVKWRMSENKEASF.

Residues 4–105 (TPCAACKLLR…QDLLTAKEEL (102 aa)) enclose the LOB domain. A compositionally biased stretch (low complexity) spans 264–277 (LQEGQEQTEEGQFL). Residues 264–311 (LQEGQEQTEEGQFLMQPMGQENLHDEEEEEELEPPVKWRMSENKEASF) form a disordered region. Over residues 287-296 (HDEEEEEELE) the composition is skewed to acidic residues. The segment covering 297 to 311 (PPVKWRMSENKEASF) has biased composition (basic and acidic residues).

Belongs to the LOB domain-containing protein family.

This chain is LOB domain-containing protein 10 (LBD10), found in Arabidopsis thaliana (Mouse-ear cress).